The primary structure comprises 95 residues: MRQYELMIILDPSQDERTVAPSLDKFLEVVRKDKGDVVKVDVWGKRRLAYPINKKEEGIYAVIDLKCESATVLELDRVLNLNDGVLRTKVLRLDK.

The protein belongs to the bacterial ribosomal protein bS6 family.

Functionally, binds together with bS18 to 16S ribosomal RNA. The sequence is that of Small ribosomal subunit protein bS6 from Corynebacterium efficiens (strain DSM 44549 / YS-314 / AJ 12310 / JCM 11189 / NBRC 100395).